The sequence spans 494 residues: Alpha-amylase-related protein (494 aa).

A signal peptide spans 1–20 (MIKFALALTLCLAGASLSLA). Glutamine 21 is subject to Pyrrolidone carboxylic acid. Cysteines 48 and 104 form a disulfide. The Ca(2+) site is built by asparagine 118, glutamine 169, and aspartate 178. A disulfide bond links cysteine 157 and cysteine 171. Arginine 206 serves as a coordination point for chloride. Residue aspartate 208 is the Nucleophile of the active site. Ca(2+) is bound at residue histidine 212. The active-site Proton donor is glutamate 245. Chloride is bound by residues asparagine 308 and arginine 343. 3 cysteine pairs are disulfide-bonded: cysteine 376–cysteine 382, cysteine 418–cysteine 441, and cysteine 448–cysteine 460.

Belongs to the glycosyl hydrolase 13 family. As to quaternary structure, monomer. Ca(2+) serves as cofactor. It depends on chloride as a cofactor.

Its subcellular location is the secreted. The enzyme catalyses Endohydrolysis of (1-&gt;4)-alpha-D-glucosidic linkages in polysaccharides containing three or more (1-&gt;4)-alpha-linked D-glucose units.. The polypeptide is Alpha-amylase-related protein (Amyrel) (Drosophila kikkawai (Fruit fly)).